Consider the following 400-residue polypeptide: Serpin E3 (400 aa).

Residues 1-19 (MQSLLLALLLLPVCSPGGA) form the signal peptide. A glycan (N-linked (GlcNAc...) asparagine) is linked at N46.

This sequence belongs to the serpin family.

Its subcellular location is the secreted. Probable serine protease inhibitor. The sequence is that of Serpin E3 (SERPINE3) from Bos taurus (Bovine).